Here is a 125-residue protein sequence, read N- to C-terminus: Small ribosomal subunit protein uS12 (125 aa).

D89 carries the post-translational modification 3-methylthioaspartic acid.

Belongs to the universal ribosomal protein uS12 family. Part of the 30S ribosomal subunit. Contacts proteins S8 and S17. May interact with IF1 in the 30S initiation complex.

In terms of biological role, with S4 and S5 plays an important role in translational accuracy. Interacts with and stabilizes bases of the 16S rRNA that are involved in tRNA selection in the A site and with the mRNA backbone. Located at the interface of the 30S and 50S subunits, it traverses the body of the 30S subunit contacting proteins on the other side and probably holding the rRNA structure together. The combined cluster of proteins S8, S12 and S17 appears to hold together the shoulder and platform of the 30S subunit. This chain is Small ribosomal subunit protein uS12, found in Wigglesworthia glossinidia brevipalpis.